A 211-amino-acid polypeptide reads, in one-letter code: Protein-methionine-sulfoxide reductase heme-binding subunit MsrQ (211 aa).

The next 4 membrane-spanning stretches (helical) occupy residues 17 to 37 (LAGL…GLGA), 82 to 102 (LWCF…ELGV), 116 to 136 (PYLT…FTST), and 153 to 173 (FVYL…KIIS).

Belongs to the MsrQ family. As to quaternary structure, heterodimer of a catalytic subunit (MsrP) and a heme-binding subunit (MsrQ). FMN serves as cofactor. It depends on heme b as a cofactor.

The protein localises to the cell inner membrane. Part of the MsrPQ system that repairs oxidized periplasmic proteins containing methionine sulfoxide residues (Met-O), using respiratory chain electrons. Thus protects these proteins from oxidative-stress damage caused by reactive species of oxygen and chlorine generated by the host defense mechanisms. MsrPQ is essential for the maintenance of envelope integrity under bleach stress, rescuing a wide series of structurally unrelated periplasmic proteins from methionine oxidation, including the primary periplasmic chaperone SurA and the lipoprotein Pal. MsrQ provides electrons for reduction to the reductase catalytic subunit MsrP, using the quinone pool of the respiratory chain. This chain is Protein-methionine-sulfoxide reductase heme-binding subunit MsrQ, found in Shigella sonnei (strain Ss046).